The chain runs to 416 residues: uncharacterized protein (416 aa).

The next 9 helical transmembrane spans lie at leucine 5–leucine 25, isoleucine 84–valine 104, alanine 128–isoleucine 148, leucine 160–tryptophan 180, valine 192–phenylalanine 212, proline 237–leucine 257, phenylalanine 263–leucine 283, leucine 288–threonine 308, and isoleucine 312–isoleucine 332.

It belongs to the glycosyltransferase 83 family.

Its subcellular location is the cell membrane. This is an uncharacterized protein from Aquifex aeolicus (strain VF5).